The primary structure comprises 460 residues: Nuclear distribution protein PAC1-1 (460 aa).

One can recognise a LisH domain in the interval 9-41 (QADELHRALIAYLTAANLPNTAAALREELNLGE). Positions 74–96 (LVTQIMDLESRNHILQSELDNAT) form a coiled coil. The span at 90 to 100 (SELDNATPTSR) shows a compositional bias: polar residues. The disordered stretch occupies residues 90 to 115 (SELDNATPTSRQNKDPVAWLPRAPPR). WD repeat units lie at residues 120 to 161 (SHRD…RTIK), 163 to 203 (HTKA…KNIR), 207 to 247 (GHDH…CVKT), 250 to 289 (GHAEWVRDVCPSFDGKYILSTSDDYTSRLWDVTVTNPEPR), 294 to 354 (GHEH…KTLA), 355 to 394 (GHDNWVRGLVFHPGGKYLLSVSDDKTLRCWDLTQEGKCVK), 399 to 439 (AHGH…VTPD), and 441 to 460 (QIRCVIATGSVDLNVRIFAN).

It belongs to the WD repeat LIS1/nudF family. Self-associates. Interacts with NDL1 and dynein.

The protein localises to the cytoplasm. Its subcellular location is the cytoskeleton. It localises to the spindle pole. Its function is as follows. Positively regulates the activity of the minus-end directed microtubule motor protein dynein. May enhance dynein-mediated microtubule sliding by targeting dynein to the microtubule plus end. Required for nuclear migration during vegetative growth as well as development. Required for retrograde early endosome (EE) transport from the hyphal tip. Required for localization of dynein to the mitotic spindle poles. Recruits additional proteins to the dynein complex at SPBs. The sequence is that of Nuclear distribution protein PAC1-1 from Sordaria macrospora (strain ATCC MYA-333 / DSM 997 / K(L3346) / K-hell).